A 185-amino-acid polypeptide reads, in one-letter code: Threonylcarbamoyl-AMP synthase (185 aa).

The 183-residue stretch at glutamate 3 to arginine 185 folds into the YrdC-like domain.

It belongs to the SUA5 family. TsaC subfamily.

The protein resides in the cytoplasm. The enzyme catalyses L-threonine + hydrogencarbonate + ATP = L-threonylcarbamoyladenylate + diphosphate + H2O. In terms of biological role, required for the formation of a threonylcarbamoyl group on adenosine at position 37 (t(6)A37) in tRNAs that read codons beginning with adenine. Catalyzes the conversion of L-threonine, HCO(3)(-)/CO(2) and ATP to give threonylcarbamoyl-AMP (TC-AMP) as the acyladenylate intermediate, with the release of diphosphate. The chain is Threonylcarbamoyl-AMP synthase from Shewanella woodyi (strain ATCC 51908 / MS32).